Reading from the N-terminus, the 323-residue chain is Putative divalent cation/proton antiporter TMEM165 (323 aa).

The N-terminal stretch at 1–33 (MAAAARGSGRAPTRRLLVLLLLQLLWAPAGVRA) is a signal peptide. Residues 34–89 (GPEEDLSHRNQEPPAPAQQLQPQPAAVQGLEPARAEKGLTPVAPVHTNKEDAAAQT) lie on the Lumenal side of the membrane. Positions 35 to 44 (PEEDLSHRNQ) are enriched in basic and acidic residues. The tract at residues 35 to 60 (PEEDLSHRNQEPPAPAQQLQPQPAAV) is disordered. A compositionally biased stretch (low complexity) spans 50–59 (AQQLQPQPAA). Residues 90–110 (NLGFIHAFVAAISVIIVSELG) traverse the membrane as a helical segment. The Cytoplasmic portion of the chain corresponds to 111–126 (DKTFFIAAIMAMRYNR). A helical transmembrane segment spans residues 127–147 (LTVLAGAMLALALMTCLSVLF). At 148–151 (GYAT) the chain is on the lumenal side. The chain crosses the membrane as a helical span at residues 152-172 (TVIPRVYTYYVSTALFAIFGI). Residues 173-227 (RMLREGLKMSPDEGQEELEEVQAELKKKDEEFQRTKLLNGPDVETGTSTAIPQKK) lie on the Cytoplasmic side of the membrane. Residues 184 to 211 (DEGQEELEEVQAELKKKDEEFQRTKLLN) are a coiled coil. Residues 228-248 (WLHFISPIFVQALTLTFLAEW) traverse the membrane as a helical segment. The Lumenal portion of the chain corresponds to 249 to 266 (GDRSQLTTIVLAAREDPY). The helical transmembrane segment at 267–287 (GVAVGGTVGHCLCTGLAVIGG) threads the bilayer. Residues 288–298 (RMIAQKISVRT) lie on the Cytoplasmic side of the membrane. A helical transmembrane segment spans residues 299-319 (VTIIGGIVFLAFAFSALFISP). At 320 to 323 (ESGF) the chain is on the lumenal side.

Belongs to the GDT1 family. Expressed in mammary epithelial cells (at protein level).

It is found in the golgi apparatus membrane. It carries out the reaction Ca(2+)(in) + n H(+)(out) = Ca(2+)(out) + n H(+)(in). The enzyme catalyses Mn(2+)(in) + n H(+)(out) = Mn(2+)(out) + n H(+)(in). Functionally, putative divalent cation:proton antiporter that exchanges calcium or manganese ions for protons across the Golgi membrane. Mediates the reversible transport of calcium or manganese to the Golgi lumen driven by the proton gradient and possibly the membrane potential generated by V-ATPase. Provides calcium or manganese cofactors to resident Golgi enzymes and contributes to the maintenance of an acidic luminal Golgi pH required for proper functioning of the secretory pathway. Promotes Ca(2+) storage within the Golgi lumen of the mammary epithelial cells to be then secreted into milk. The transport mechanism and stoichiometry remains to be elucidated. The sequence is that of Putative divalent cation/proton antiporter TMEM165 from Mus musculus (Mouse).